The sequence spans 511 residues: Coatomer subunit delta (511 aa).

Residues 167 to 177 are compositionally biased toward basic and acidic residues; the sequence is QQARRDAERQG. The disordered stretch occupies residues 167–188; sequence QQARRDAERQGKKAPGFGGFGS. Ser-223 bears the Phosphoserine mark. Lys-233 and Lys-241 each carry N6-acetyllysine. Ser-244 carries the phosphoserine modification. The 241-residue stretch at 271–511 folds into the MHD domain; sequence MESVHMKIEE…TFLVDKYEIL (241 aa). 2 positions are modified to N6-acetyllysine: Lys-309 and Lys-351. At Ser-493 the chain carries Phosphoserine.

It belongs to the adaptor complexes medium subunit family. Delta-COP subfamily. As to quaternary structure, oligomeric complex that consists of at least the alpha, beta, beta', gamma, delta, epsilon and zeta subunits.

The protein localises to the cytoplasm. Its subcellular location is the golgi apparatus membrane. The protein resides in the cytoplasmic vesicle. It is found in the COPI-coated vesicle membrane. The coatomer is a cytosolic protein complex that binds to dilysine motifs and reversibly associates with Golgi non-clathrin-coated vesicles, which further mediate biosynthetic protein transport from the ER, via the Golgi up to the trans Golgi network. Coatomer complex is required for budding from Golgi membranes, and is essential for the retrograde Golgi-to-ER transport of dilysine-tagged proteins. In mammals, the coatomer can only be recruited by membranes associated to ADP-ribosylation factors (ARFs), which are small GTP-binding proteins; the complex also influences the Golgi structural integrity, as well as the processing, activity, and endocytic recycling of LDL receptors. This chain is Coatomer subunit delta (ARCN1), found in Pongo abelii (Sumatran orangutan).